Reading from the N-terminus, the 95-residue chain is uncharacterized protein (95 aa).

3 consecutive transmembrane segments (helical) span residues 3-23 (YTVLIPLFIFIGAMVLFGFSF), 35-55 (ILFLAYCVDFLALIIAVMMLT), and 63-83 (MLGVLIPVLILSIIMFFVMII).

The protein localises to the cell membrane. This is an uncharacterized protein from Mycoplasma pneumoniae (strain ATCC 29342 / M129 / Subtype 1) (Mycoplasmoides pneumoniae).